The following is a 264-amino-acid chain: MAGPTTAERGDRQQESSGPPPARWSGTRRLRALVVLAALLVLLAGGCAWLLYGSSWLRLERVSVSGTRMLTPADVREAASVPVGAPLVSVDTEAVEARLRRKLPRIDTVDVVRSWPHGIGLKVTERTPVLLVRKAGTFVEVDDDGVRFATVSQAPKGVPVLELTASRSGSGAASFRRFGTDRLVREAVRVGGDLPAAVARQTRTVKVGSYDDISLELGDGRSVAWGSGEDGRAKARALTALMKAVPGARHFDVSVPTAPASSGS.

The segment at 1-24 is disordered; that stretch reads MAGPTTAERGDRQQESSGPPPARW. Topologically, residues 1-31 are cytoplasmic; sequence MAGPTTAERGDRQQESSGPPPARWSGTRRLR. The helical transmembrane segment at 32–52 threads the bilayer; it reads ALVVLAALLVLLAGGCAWLLY. Over 53-264 the chain is Extracellular; the sequence is GSSWLRLERV…VPTAPASSGS (212 aa). The POTRA domain occupies 57–126; sequence LRLERVSVSG…HGIGLKVTER (70 aa).

The protein belongs to the FtsQ/DivIB family. FtsQ subfamily.

The protein localises to the cell membrane. In terms of biological role, essential cell division protein. The chain is Cell division protein FtsQ from Streptomyces collinus.